The following is an 80-amino-acid chain: Sec-independent protein translocase protein TatA (80 aa).

The helical transmembrane segment at 1–21 threads the bilayer; the sequence is MGISMWQLLIVLLIIVLLFGT. The segment at 39-80 is disordered; that stretch reads KKAMSDGESEEDKEPKKLSQNESRTIEGSVERNDAKTESKHS. A compositionally biased stretch (basic and acidic residues) spans 67 to 80; that stretch reads SVERNDAKTESKHS.

Belongs to the TatA/E family. The Tat system comprises two distinct complexes: a TatABC complex, containing multiple copies of TatA, TatB and TatC subunits, and a separate TatA complex, containing only TatA subunits. Substrates initially bind to the TatABC complex, which probably triggers association of the separate TatA complex to form the active translocon.

It localises to the cell inner membrane. Its function is as follows. Part of the twin-arginine translocation (Tat) system that transports large folded proteins containing a characteristic twin-arginine motif in their signal peptide across membranes. TatA could form the protein-conducting channel of the Tat system. This Hahella chejuensis (strain KCTC 2396) protein is Sec-independent protein translocase protein TatA.